The sequence spans 586 residues: Dolichyl-diphosphooligosaccharide--protein glycosyltransferase subunit 1 (586 aa).

Positions 1 to 15 (MRLLFAIALLGAVFA) are cleaved as a signal peptide. Topologically, residues 16–421 (EDAWKAANVD…EFEFVDMLRE (406 aa)) are lumenal. Residues 422-442 (PLLASAFFFSLFFVIIVYSRF) traverse the membrane as a helical segment. At 443–586 (DFTISSDPAK…NRADSVLASI (144 aa)) the chain is on the cytoplasmic side.

Belongs to the OST1 family. Component of the oligosaccharyltransferase (OST) complex.

The protein resides in the endoplasmic reticulum membrane. The protein localises to the cytoplasmic granule. Its pathway is protein modification; protein glycosylation. Subunit of the oligosaccharyl transferase (OST) complex that catalyzes the initial transfer of a defined glycan (Glc(3)Man(9)GlcNAc(2) in eukaryotes) from the lipid carrier dolichol-pyrophosphate to an asparagine residue within an Asn-X-Ser/Thr consensus motif in nascent polypeptide chains, the first step in protein N-glycosylation. N-glycosylation occurs cotranslationally and the complex associates with the Sec61 complex at the channel-forming translocon complex that mediates protein translocation across the endoplasmic reticulum (ER). All subunits are required for a maximal enzyme activity. This is Dolichyl-diphosphooligosaccharide--protein glycosyltransferase subunit 1 from Caenorhabditis elegans.